The chain runs to 79 residues: Exodeoxyribonuclease 7 small subunit (79 aa).

It belongs to the XseB family. In terms of assembly, heterooligomer composed of large and small subunits.

The protein localises to the cytoplasm. It catalyses the reaction Exonucleolytic cleavage in either 5'- to 3'- or 3'- to 5'-direction to yield nucleoside 5'-phosphates.. In terms of biological role, bidirectionally degrades single-stranded DNA into large acid-insoluble oligonucleotides, which are then degraded further into small acid-soluble oligonucleotides. This chain is Exodeoxyribonuclease 7 small subunit, found in Syntrophus aciditrophicus (strain SB).